An 89-amino-acid polypeptide reads, in one-letter code: Small ribosomal subunit protein uS15 (89 aa).

It belongs to the universal ribosomal protein uS15 family. In terms of assembly, part of the 30S ribosomal subunit. Forms a bridge to the 50S subunit in the 70S ribosome, contacting the 23S rRNA.

In terms of biological role, one of the primary rRNA binding proteins, it binds directly to 16S rRNA where it helps nucleate assembly of the platform of the 30S subunit by binding and bridging several RNA helices of the 16S rRNA. Forms an intersubunit bridge (bridge B4) with the 23S rRNA of the 50S subunit in the ribosome. The protein is Small ribosomal subunit protein uS15 of Lactobacillus helveticus (strain DPC 4571).